The following is a 66-amino-acid chain: Large ribosomal subunit protein bL35 (66 aa).

The disordered stretch occupies residues 20–40 (GKVKHAQRGKRHGMIKRTKKQ).

It belongs to the bacterial ribosomal protein bL35 family.

The polypeptide is Large ribosomal subunit protein bL35 (Nitrobacter winogradskyi (strain ATCC 25391 / DSM 10237 / CIP 104748 / NCIMB 11846 / Nb-255)).